Consider the following 406-residue polypeptide: Probable endo-xylogalacturonan hydrolase A (406 aa).

Positions 1-18 (MTLYRNLLLLASLGLSYA) are cleaved as a signal peptide. The N-linked (GlcNAc...) asparagine glycan is linked to Asn-84. PbH1 repeat units lie at residues 183–213 (ATNV…DIGE) and 214–235 (STYV…ALKP). Asp-228 functions as the Proton donor in the catalytic mechanism. His-251 is a catalytic residue. PbH1 repeat units follow at residues 266-289 (VKNI…KTYP), 299-320 (VSNV…QIQS), and 333-375 (PGNA…SISG). Asn-278 and Asn-301 each carry an N-linked (GlcNAc...) asparagine glycan.

It belongs to the glycosyl hydrolase 28 family.

The protein localises to the secreted. Pectinolytic enzyme involved in the degradation of xylogalacturonan (xga), a galacturonan backbone heavily substituted with xylose, and which is one important component of the hairy regions of pectin. Activity requires a galacturonic acid backbone substituted with xylose. This chain is Probable endo-xylogalacturonan hydrolase A (xghA), found in Aspergillus niger (strain ATCC MYA-4892 / CBS 513.88 / FGSC A1513).